Here is a 59-residue protein sequence, read N- to C-terminus: Large ribosomal subunit protein uL30 (59 aa).

The protein belongs to the universal ribosomal protein uL30 family. In terms of assembly, part of the 50S ribosomal subunit.

This chain is Large ribosomal subunit protein uL30, found in Psychrobacter cryohalolentis (strain ATCC BAA-1226 / DSM 17306 / VKM B-2378 / K5).